A 291-amino-acid polypeptide reads, in one-letter code: Sulfotransferase 1A1 (291 aa).

K44–W49 is a 3'-phosphoadenylyl sulfate binding site. K102–H104 contacts substrate. H104 acts as the Proton acceptor in catalysis. 3'-phosphoadenylyl sulfate contacts are provided by residues R126, S134, Y189, T223–M228, and F251–G255. S134 carries the phosphoserine modification.

This sequence belongs to the sulfotransferase 1 family. In terms of assembly, homodimer. In terms of tissue distribution, expressed in brain, colon, liver, and small intestine of mice colonized with B.ovatus and L.plantarum.

Its subcellular location is the cytoplasm. It carries out the reaction a phenol + 3'-phosphoadenylyl sulfate = an aryl sulfate + adenosine 3',5'-bisphosphate + H(+). It catalyses the reaction 17beta-estradiol + 3'-phosphoadenylyl sulfate = 17beta-estradiol 3-sulfate + adenosine 3',5'-bisphosphate + H(+). The catalysed reaction is 4-ethylphenol + 3'-phosphoadenylyl sulfate = 4-ethylphenyl sulfate + adenosine 3',5'-bisphosphate + H(+). The enzyme catalyses 4-nitrophenol + 3'-phosphoadenylyl sulfate = 4-nitrophenyl sulfate + adenosine 3',5'-bisphosphate. It carries out the reaction dopamine + 3'-phosphoadenylyl sulfate = dopamine 3-O-sulfate + adenosine 3',5'-bisphosphate + H(+). It catalyses the reaction dopamine + 3'-phosphoadenylyl sulfate = dopamine 4-O-sulfate + adenosine 3',5'-bisphosphate + H(+). The catalysed reaction is 3,3',5-triiodo-L-thyronine + 3'-phosphoadenylyl sulfate = 3,3',5-triiodo-L-thyronine sulfate + adenosine 3',5'-bisphosphate + H(+). The enzyme catalyses 3,3',5'-triiodo-L-thyronine + 3'-phosphoadenylyl sulfate = 3,3',5'-triiodo-L-thyronine sulfate + adenosine 3',5'-bisphosphate + H(+). It carries out the reaction 3,3'-diiodo-L-thyronine + 3'-phosphoadenylyl sulfate = 3,3'-diiodo-L-thyronine sulfate + adenosine 3',5'-bisphosphate + H(+). It catalyses the reaction L-thyroxine + 3'-phosphoadenylyl sulfate = L-thyroxine sulfate + adenosine 3',5'-bisphosphate + H(+). Sulfotransferase that utilizes 3'-phospho-5'-adenylyl sulfate (PAPS) as sulfonate donor to catalyze the sulfate conjugation of a wide variety of acceptor molecules bearing a hydroxyl or an amine group. Sulfonation increases the water solubility of most compounds, and therefore their renal excretion, but it can also result in bioactivation to form active metabolites. Displays broad substrate specificity for small phenolic compounds. Plays an important role in the sulfonation of endogenous molecules such as steroid hormones. Mediates also the metabolic activation of carcinogenic N-hydroxyarylamines leading to highly reactive intermediates capable of forming DNA adducts, potentially resulting in mutagenesis. May play a role in gut microbiota-host metabolic interaction. O-sulfonates 4-ethylphenol (4-EP), a dietary tyrosine-derived metabolite produced by gut bacteria. The product 4-EPS crosses the blood-brain barrier and may negatively regulate oligodendrocyte maturation and myelination, affecting the functional connectivity of different brain regions associated with the limbic system. Catalyzes the sulfate conjugation of dopamine. Catalyzes the sulfation of T4 (L-thyroxine/3,5,3',5'-tetraiodothyronine), T3 (3,5,3'-triiodothyronine), rT3 (3,3',5'-triiodothyronine) and 3,3'-T2 (3,3'-diiodothyronine), with a substrate preference of 3,3'-T2 &gt; rT3 &gt; T3 &gt; T4. This chain is Sulfotransferase 1A1 (Sult1a1), found in Mus musculus (Mouse).